Consider the following 58-residue polypeptide: uncharacterized protein (58 aa).

Disordered stretches follow at residues 1–20 (MKKN…MNKK) and 38–58 (IIET…KKQQ).

This is an uncharacterized protein from Bacillus subtilis (strain 168).